A 207-amino-acid polypeptide reads, in one-letter code: Small ribosomal subunit protein bS6c (207 aa).

The N-terminal 59 residues, 1-59, are a transit peptide targeting the chloroplast; it reads MASSLCVSNSTICPLPNVSSQPLLSFSHSLRPFISKSKPMCASIQKRDGSQFVVKSQAL. Positions 69-99 are disordered; that stretch reads GFGSDDDPTSPSGSGVSTALEDKPEPQCPPG. The segment covering 77 to 86 has biased composition (low complexity); sequence TSPSGSGVST.

This sequence belongs to the bacterial ribosomal protein bS6 family. In terms of assembly, part of the 30S ribosomal subunit.

The protein localises to the plastid. The protein resides in the chloroplast. Binds together with bS18 to 16S ribosomal RNA. The protein is Small ribosomal subunit protein bS6c (RPS6) of Arabidopsis thaliana (Mouse-ear cress).